The primary structure comprises 520 residues: Anthranilate synthase component 1 (520 aa).

Residues S40 and P291–M293 contribute to the L-tryptophan site. G328–T329 serves as a coordination point for chorismate. E361 provides a ligand contact to Mg(2+). Chorismate is bound by residues Y449, R469, G483–G485, and G485. Residue E498 participates in Mg(2+) binding.

The protein belongs to the anthranilate synthase component I family. In terms of assembly, heterotetramer consisting of two non-identical subunits: a beta subunit (TrpG) and a large lpha subunit (TrpE). Requires Mg(2+) as cofactor.

The enzyme catalyses chorismate + L-glutamine = anthranilate + pyruvate + L-glutamate + H(+). Its pathway is amino-acid biosynthesis; L-tryptophan biosynthesis; L-tryptophan from chorismate: step 1/5. With respect to regulation, cooperatively feedback inhibited by tryptophan. Part of a heterotetrameric complex that catalyzes the two-step biosynthesis of anthranilate, an intermediate in the biosynthesis of L-tryptophan. In the first step, the glutamine-binding beta subunit (TrpG) of anthranilate synthase (AS) provides the glutamine amidotransferase activity which generates ammonia as a substrate that, along with chorismate, is used in the second step, catalyzed by the large alpha subunit of AS (TrpE) to produce anthranilate. In the absence of TrpG, TrpE can synthesize anthranilate directly from chorismate and high concentrations of ammonia. The sequence is that of Anthranilate synthase component 1 (trpE) from Escherichia coli (strain K12).